The sequence spans 451 residues: COBRA-like protein 6 (451 aa).

The first 21 residues, 1–21, serve as a signal peptide directing secretion; that stretch reads MAVLGSLLLLILAATLSVAVA. Asn30, Asn155, Asn163, Asn202, Asn227, Asn323, Asn338, and Asn357 each carry an N-linked (GlcNAc...) asparagine glycan. A lipid anchor (GPI-anchor amidated asparagine) is attached at Asn426. The propeptide at 427–451 is removed in mature form; the sequence is AAPPAAASLVGSAVAMAALVFFLMA.

The protein belongs to the COBRA family.

The protein localises to the cell membrane. In terms of biological role, involved in determining the orientation of cell expansion, probably by playing an important role in cellulose deposition. May act by recruiting cellulose synthesizing complexes to discrete positions on the cell surface. This chain is COBRA-like protein 6 (BC1L7), found in Oryza sativa subsp. japonica (Rice).